Here is a 689-residue protein sequence, read N- to C-terminus: Protein CFAP20DC (689 aa).

Disordered regions lie at residues 241-263 (LKST…NRIE), 333-423 (SKES…GPSE), and 584-659 (ISTS…DLSV). Composition is skewed to polar residues over residues 251–260 (TPSGSSSGNN) and 343–359 (EESQ…SSRP). Residues 394–405 (SEDDFYGGDSSE) are compositionally biased toward acidic residues. Polar residues predominate over residues 409 to 421 (HSIQGSRGPTTGP). Residues 584–593 (ISTSSDDTTT) are compositionally biased toward low complexity.

The polypeptide is Protein CFAP20DC (Homo sapiens (Human)).